The sequence spans 145 residues: Transcription antitermination protein NusB (145 aa).

Belongs to the NusB family.

In terms of biological role, involved in transcription antitermination. Required for transcription of ribosomal RNA (rRNA) genes. Binds specifically to the boxA antiterminator sequence of the ribosomal RNA (rrn) operons. This chain is Transcription antitermination protein NusB, found in Geotalea daltonii (strain DSM 22248 / JCM 15807 / FRC-32) (Geobacter daltonii).